The sequence spans 157 residues: Probable intracellular pathogenesis-related protein T1 (157 aa).

2 N-linked (GlcNAc...) asparagine glycosylation sites follow: N79 and N117.

It belongs to the BetVI family.

The protein is Probable intracellular pathogenesis-related protein T1 (PCKR3) of Catharanthus roseus (Madagascar periwinkle).